Reading from the N-terminus, the 595-residue chain is Chaperone protein HscA homolog (595 aa).

The protein belongs to the heat shock protein 70 family.

In terms of biological role, chaperone involved in the maturation of iron-sulfur cluster-containing proteins. Has a low intrinsic ATPase activity which is markedly stimulated by HscB. The chain is Chaperone protein HscA homolog from Rickettsia akari (strain Hartford).